Reading from the N-terminus, the 29-residue chain is Dermaseptin-J8 (29 aa).

Expressed by the skin glands.

Its subcellular location is the secreted. Functionally, has antimicrobial activity. This is Dermaseptin-J8 from Phasmahyla jandaia (Jandaia leaf frog).